The primary structure comprises 122 residues: Large ribosomal subunit protein uL14 (122 aa).

This sequence belongs to the universal ribosomal protein uL14 family. In terms of assembly, part of the 50S ribosomal subunit. Forms a cluster with proteins L3 and L19. In the 70S ribosome, L14 and L19 interact and together make contacts with the 16S rRNA in bridges B5 and B8.

In terms of biological role, binds to 23S rRNA. Forms part of two intersubunit bridges in the 70S ribosome. The protein is Large ribosomal subunit protein uL14 of Buchnera aphidicola subsp. Acyrthosiphon pisum (strain 5A).